The primary structure comprises 209 residues: uncharacterized protein (209 aa).

This is an uncharacterized protein from Magallana gigas (Pacific oyster).